The following is a 175-amino-acid chain: General stress protein 14 (175 aa).

This sequence belongs to the NAD(P)H dehydrogenase (quinone) family.

The sequence is that of General stress protein 14 (ywrO) from Bacillus subtilis (strain 168).